The following is a 363-amino-acid chain: Cysteine proteinase 15A (363 aa).

The first 18 residues, 1-18 (MDRRFLFALFLFAAVATA), serve as a signal peptide directing secretion. Positions 19–131 (VTDDTNNDDF…QKAPILPTTN (113 aa)) are cleaved as a propeptide — activation peptide. 2 cysteine pairs are disulfide-bonded: Cys153–Cys203 and Cys187–Cys236. Residue Cys156 is part of the active site. An N-linked (GlcNAc...) asparagine glycan is attached at Asn249. The cysteines at positions 292 and 347 are disulfide-linked. Active-site residues include His299 and Asn326.

This sequence belongs to the peptidase C1 family.

The chain is Cysteine proteinase 15A from Pisum sativum (Garden pea).